Here is a 101-residue protein sequence, read N- to C-terminus: Small ribosomal subunit protein bS18c (101 aa).

Positions 1-19 (MNKSKRPFTKSKRSFRRRL) are enriched in basic residues. The segment at 1 to 23 (MNKSKRPFTKSKRSFRRRLPPIQ) is disordered.

The protein belongs to the bacterial ribosomal protein bS18 family. In terms of assembly, part of the 30S ribosomal subunit.

The protein localises to the plastid. It is found in the chloroplast. The chain is Small ribosomal subunit protein bS18c from Lobularia maritima (Sweet alyssum).